Reading from the N-terminus, the 170-residue chain is MTRKQRRLTIIGGALFVLAVAAGLVLNALRDSIVFFSTPTMVAEKHIGPGKRFRLGGLVQPGSLKRGDDLAVTFEVADGGAKLPVAYKGILPDLFREGQGVVAEGALDAAGVFKADTVLAKHDETYMPKEVADTLKKQGHWKDDYGKPQAAKPGPVSMREGEKTAAGATQ.

Over 1–7 (MTRKQRR) the chain is Cytoplasmic. The helical; Signal-anchor for type II membrane protein transmembrane segment at 8–28 (LTIIGGALFVLAVAAGLVLNA) threads the bilayer. The Periplasmic segment spans residues 29–170 (LRDSIVFFST…GEKTAAGATQ (142 aa)). 2 residues coordinate heme: His-122 and Tyr-126. The span at 137 to 146 (KQGHWKDDYG) shows a compositional bias: basic and acidic residues. Positions 137-170 (KQGHWKDDYGKPQAAKPGPVSMREGEKTAAGATQ) are disordered.

This sequence belongs to the CcmE/CycJ family.

Its subcellular location is the cell inner membrane. Functionally, heme chaperone required for the biogenesis of c-type cytochromes. Transiently binds heme delivered by CcmC and transfers the heme to apo-cytochromes in a process facilitated by CcmF and CcmH. In Bradyrhizobium sp. (strain BTAi1 / ATCC BAA-1182), this protein is Cytochrome c-type biogenesis protein CcmE.